The primary structure comprises 122 residues: MIQQESQLKVADNTGAKKVKCFKVLGGSRRRYATVGDIIVCSVRDVEPDSSIKKGDVVKAVIVRTRRDILRKDGSSLRFDTNSCVIIDEKGNPKGTRIFGPIAREIRDRGFVKISSLAPEVI.

Belongs to the universal ribosomal protein uL14 family. In terms of assembly, part of the 50S ribosomal subunit. Forms a cluster with proteins L3 and L19. In the 70S ribosome, L14 and L19 interact and together make contacts with the 16S rRNA in bridges B5 and B8.

Functionally, binds to 23S rRNA. Forms part of two intersubunit bridges in the 70S ribosome. This Chlamydia caviae (strain ATCC VR-813 / DSM 19441 / 03DC25 / GPIC) (Chlamydophila caviae) protein is Large ribosomal subunit protein uL14.